The sequence spans 170 residues: RNA pyrophosphohydrolase (170 aa).

The region spanning 6–150 (GFRPNVGIIL…KRDVYRRALR (145 aa)) is the Nudix hydrolase domain. The short motif at 39–60 (GGINAHESPEQALYRELHEEVG) is the Nudix box element.

It belongs to the Nudix hydrolase family. RppH subfamily. It depends on a divalent metal cation as a cofactor.

Its function is as follows. Accelerates the degradation of transcripts by removing pyrophosphate from the 5'-end of triphosphorylated RNA, leading to a more labile monophosphorylated state that can stimulate subsequent ribonuclease cleavage. The polypeptide is RNA pyrophosphohydrolase (Cellvibrio japonicus (strain Ueda107) (Pseudomonas fluorescens subsp. cellulosa)).